The chain runs to 605 residues: UvrABC system protein C (605 aa).

Positions 14–92 (QSCGVYKMVG…IKSLKPLYNI (79 aa)) constitute a GIY-YIG domain. In terms of domain architecture, UVR spans 202-237 (KEVKEQLLFTMRKCSSEENYELAAIYRDRVKFLEQI).

This sequence belongs to the UvrC family. In terms of assembly, interacts with UvrB in an incision complex.

It is found in the cytoplasm. Its function is as follows. The UvrABC repair system catalyzes the recognition and processing of DNA lesions. UvrC both incises the 5' and 3' sides of the lesion. The N-terminal half is responsible for the 3' incision and the C-terminal half is responsible for the 5' incision. The sequence is that of UvrABC system protein C from Wolbachia sp. subsp. Drosophila simulans (strain wRi).